Reading from the N-terminus, the 155-residue chain is Dau c 1 isoallergen Dau c 1.0401 (155 aa).

It belongs to the BetVI family. In terms of assembly, monomer. As to expression, expressed in roots (at protein level). Expressed in roots.

In Daucus carota subsp. sativus (Carrot), this protein is Dau c 1 isoallergen Dau c 1.0401.